Consider the following 932-residue polypeptide: Potassium voltage-gated channel subfamily KQT member 5 (932 aa).

Over 1-125 the chain is Cytoplasmic; sequence MPRHHAGGEE…YNVLERPRGW (125 aa). Ser88 bears the Phosphoserine mark. Residues 126-146 traverse the membrane as a helical segment; it reads AFIYHAFVFLLVFGCLILSVF. The Extracellular portion of the chain corresponds to 147 to 156; the sequence is STIPEHTKLA. Residues 157–177 form a helical membrane-spanning segment; the sequence is SSCLLILEFVMIVVFGLEFII. The Cytoplasmic portion of the chain corresponds to 178–200; sequence RIWSAGCCCRYRGWQGRLRFARK. Residues 201-221 traverse the membrane as a helical segment; the sequence is PFCVIDTIVLIASIAVVSAKT. At 222–229 the chain is on the extracellular side; it reads QGNIFATS. Residues 230–252 form a helical; Voltage-sensor membrane-spanning segment; it reads ALRSLRFLQILRMVRMDRRGGTW. A 1,2-diacyl-sn-glycero-3-phospho-(1D-myo-inositol-4,5-bisphosphate)-binding residues include Arg248 and Lys264. At 253–266 the chain is on the cytoplasmic side; that stretch reads KLLGSVVYAHSKEL. A helical membrane pass occupies residues 267 to 287; it reads ITAWYIGFLVLIFSSFLVYLV. At 288-298 the chain is on the extracellular side; sequence EKDANKEFSTY. Positions 299 to 319 form an intramembrane region, pore-forming; it reads ADALWWGTITLTTIGYGDKTP. Residues 320-325 are Extracellular-facing; sequence LTWLGR. A helical transmembrane segment spans residues 326-346; it reads LLSAGFALLGISFFALPAGIL. Topologically, residues 347 to 932 are cytoplasmic; it reads GSGFALKVQE…ALSLPHVKLK (586 aa). A 1,2-diacyl-sn-glycero-3-phospho-(1D-myo-inositol-4,5-bisphosphate) is bound at residue Lys361. The interaction with CALM stretch occupies residues 370–378; that stretch reads AANLIQCVW. The segment at 404-465 is disordered; sequence SPTKKEQGEA…GSPTKVQKSW (62 aa). The span at 431-440 shows a compositional bias: polar residues; it reads RGQSIKSRQA. At Ser447 the chain carries Phosphoserine. Residues 521 to 528 are interaction with CALM; that stretch reads VIRAIRIM. The interval 655–678 is disordered; sequence SDYQSPVDSKDLSGSAQNSGCLSR. Ser831 carries the post-translational modification Phosphoserine. Over residues 876 to 885 the composition is skewed to acidic residues; sequence VGPEETETDT. Residues 876 to 919 form a disordered region; the sequence is VGPEETETDTFDAAPQPAREAAFASDSLRTGRSRSSQSICKAGE. The span at 888 to 899 shows a compositional bias: low complexity; that stretch reads AAPQPAREAAFA. A compositionally biased stretch (polar residues) spans 902 to 914; sequence SLRTGRSRSSQSI.

The protein belongs to the potassium channel family. KQT (TC 1.A.1.15) subfamily. Kv7.5/KCNQ5 sub-subfamily. In terms of assembly, homotetramer; forms a functional homotetrameric channel resulting in the expression of a small M-current. Heterotetramer with KCNQ3; forms heterotetrameric M-channel responsible for the native M-current. Heterotetramer with KCNQ1; forms a functional voltage-gated potassium channel. Interacts (via C-terminus) with calmodulin/CALM1; forms a heterooctameric structure (with 4:4 KCNQ1:CALM stoichiometry); the interaction is calcium-independent, constitutive and participates in the channel function. Strongly expressed in brain and skeletal muscle. In brain, expressed in cerebral cortex, occipital pole, frontal lobe and temporal lobe. Lower levels in hippocampus and putamen. Low to undetectable levels in medulla, cerebellum and thalamus.

The protein resides in the cell membrane. It catalyses the reaction K(+)(in) = K(+)(out). Phosphatidylinositol-4,5-bisphosphate (PIP2) is essential to activate KCNQ5 channel by inducing the coupling of the voltage-sensing domain (VSD) and the pore-forming domain (PD). Calcium suppresses KCNQ5 channel current through calcium-bound CALM C-terminus. Therefore CALM acts as calcium sensor that controls channel activity. Activated by niflumic acid and the anticonvulsant retigabine. Inhibited by barium, linopirdine, XE991 and tetraethylammonium (as homomer). Insensitive to tetraethylammonium in KCNQ3-KCNQ5 heteromers. Functionally, pore-forming subunit of the voltage-gated potassium (Kv) channel broadly expressed in brain and involved in the regulation of neuronal excitability. Associates with KCNQ3/Kv7.3 pore-forming subunit to form a potassium channel which contributes to M-type current, a slowly activating and deactivating potassium conductance which plays a critical role in determining the subthreshold electrical excitability of neurons. Contributes, with other potassium channels, to the molecular diversity of a heterogeneous population of M-channels, varying in kinetic and pharmacological properties, which underlie this physiologically important current. Also forms a functional channel with KCNQ1/Kv7.1 subunit that may contribute to vasoconstriction and hypertension. Channel may be selectively permeable in vitro to other cations besides potassium, in decreasing order of affinity K(+) = Rb(+) &gt; Cs(+) &gt; Na(+). Similar to the native M-channel, KCNQ3-KCNQ5 potassium channel is suppressed by activation of the muscarinic acetylcholine receptor CHRM1. The protein is Potassium voltage-gated channel subfamily KQT member 5 of Homo sapiens (Human).